The chain runs to 689 residues: Glycine--tRNA ligase beta subunit (689 aa).

Belongs to the class-II aminoacyl-tRNA synthetase family. As to quaternary structure, tetramer of two alpha and two beta subunits.

The protein resides in the cytoplasm. The enzyme catalyses tRNA(Gly) + glycine + ATP = glycyl-tRNA(Gly) + AMP + diphosphate. The chain is Glycine--tRNA ligase beta subunit from Photobacterium profundum (strain SS9).